The sequence spans 117 residues: Non-specific lipid-transfer protein 1 (117 aa).

The first 26 residues, 1–26, serve as a signal peptide directing secretion; sequence MAYSAMTKLALVVALCMVVSVPIAQA. 4 disulfide bridges follow: Cys29/Cys76, Cys39/Cys53, Cys54/Cys99, and Cys74/Cys113.

Belongs to the plant LTP family.

In terms of biological role, plant non-specific lipid-transfer proteins transfer phospholipids as well as galactolipids across membranes. May play a role in wax or cutin deposition in the cell walls of expanding epidermal cells and certain secretory tissues. This chain is Non-specific lipid-transfer protein 1, found in Prunus dulcis (Almond).